The sequence spans 366 residues: Prostaglandin F2-alpha receptor (366 aa).

Residues 1-31 (MSINSSKQPASSAAGLIANTTCQTENRLSVF) lie on the Extracellular side of the membrane. N-linked (GlcNAc...) asparagine glycosylation is found at N4 and N19. The helical transmembrane segment at 32-55 (FSIIFMTVGIVSNSLAIAILMKAY) threads the bilayer. Residues 56-69 (QRFRRKSKASFLLL) are Cytoplasmic-facing. Residues 70–90 (ASGLVITDFFGHLINGGIAVF) traverse the membrane as a helical segment. Residues 91-109 (VYASDKDWIRFDQSNILCS) are Extracellular-facing. C108 and C186 are disulfide-bonded. Residues 110–131 (VFGISMVFSGLCPLFLGSTMAI) form a helical membrane-spanning segment. The Cytoplasmic segment spans residues 132–152 (ERCIGVTNPLFHSTKITSKHV). Residues 153–175 (KMILSGVCMFAVFVALLPILGHR) traverse the membrane as a helical segment. Over 176 to 198 (DYQIQASRTWCFYNTEHIEDWED) the chain is Extracellular. The helical transmembrane segment at 199 to 224 (RFYLLFFSSLGLLALGISFSCNAVTG) threads the bilayer. Over 225–250 (VTLLRVKFRSQQHRQGRSHHLEMVIQ) the chain is Cytoplasmic. Residues 251 to 267 (LLAIMCVSCVCWSPFLV) traverse the membrane as a helical segment. Over 268 to 285 (TMANIAINGNNSPVTCET) the chain is Extracellular. A helical membrane pass occupies residues 286–307 (TLFALRMATWNQILDPWVYILL). The Cytoplasmic portion of the chain corresponds to 308 to 366 (RKAVLRNLYKLASRCCGVNIISLHIWELSSIKNSLKVAAISESPAAEKENQQASSEAGL).

This sequence belongs to the G-protein coupled receptor 1 family. As to expression, highest expression in pregnant ovary. Also found in a low extent in the kidney. In the brain, expressed in astrocytes and oligodendrocytes, and meningeal fibroblasts, but not in migroglia cells.

The protein resides in the cell membrane. Its function is as follows. Receptor for prostaglandin F2-alpha (PGF2-alpha). The activity of this receptor is mediated by G proteins which activate a phosphatidylinositol-calcium second messenger system. Initiates luteolysis in the corpus luteum. The polypeptide is Prostaglandin F2-alpha receptor (Ptgfr) (Rattus norvegicus (Rat)).